Here is a 503-residue protein sequence, read N- to C-terminus: ATP synthase subunit alpha (503 aa).

169–176 (GDRSTGKT) contacts ATP.

Belongs to the ATPase alpha/beta chains family. In terms of assembly, F-type ATPases have 2 components, CF(1) - the catalytic core - and CF(0) - the membrane proton channel. CF(1) has five subunits: alpha(3), beta(3), gamma(1), delta(1), epsilon(1). CF(0) has three main subunits: a(1), b(2) and c(9-12). The alpha and beta chains form an alternating ring which encloses part of the gamma chain. CF(1) is attached to CF(0) by a central stalk formed by the gamma and epsilon chains, while a peripheral stalk is formed by the delta and b chains.

It is found in the cell membrane. It carries out the reaction ATP + H2O + 4 H(+)(in) = ADP + phosphate + 5 H(+)(out). Produces ATP from ADP in the presence of a proton gradient across the membrane. The alpha chain is a regulatory subunit. This is ATP synthase subunit alpha from Dehalococcoides mccartyi (strain ATCC BAA-2100 / JCM 16839 / KCTC 5957 / BAV1).